A 94-amino-acid polypeptide reads, in one-letter code: Putative RNA-binding protein RbpD (94 aa).

The 78-residue stretch at 2–79 folds into the RRM domain; it reads TIYVGNLSYR…RQLRVNKAKP (78 aa). The interval 73 to 94 is disordered; the sequence is RVNKAKPREDDRRGSWGKKQDY. The span at 78 to 94 shows a compositional bias: basic and acidic residues; sequence KPREDDRRGSWGKKQDY.

The protein is Putative RNA-binding protein RbpD (rbpD) of Nostoc sp. (strain PCC 7120 / SAG 25.82 / UTEX 2576).